Here is a 65-residue protein sequence, read N- to C-terminus: Large ribosomal subunit protein bL35 (65 aa).

The segment covering 1–16 (MVPKQKTHSGAKKRFK) has biased composition (basic residues). The interval 1 to 39 (MVPKQKTHSGAKKRFKLTGSGSVSRARAGMRHNFEHRSS) is disordered.

It belongs to the bacterial ribosomal protein bL35 family.

This is Large ribosomal subunit protein bL35 from Tropheryma whipplei (strain TW08/27) (Whipple's bacillus).